Reading from the N-terminus, the 280-residue chain is 4-diphosphocytidyl-2-C-methyl-D-erythritol kinase (280 aa).

K8 is a catalytic residue. 91-101 (PVSAGLAGGST) contacts ATP. D133 is an active-site residue.

Belongs to the GHMP kinase family. IspE subfamily.

It carries out the reaction 4-CDP-2-C-methyl-D-erythritol + ATP = 4-CDP-2-C-methyl-D-erythritol 2-phosphate + ADP + H(+). Its pathway is isoprenoid biosynthesis; isopentenyl diphosphate biosynthesis via DXP pathway; isopentenyl diphosphate from 1-deoxy-D-xylulose 5-phosphate: step 3/6. Its function is as follows. Catalyzes the phosphorylation of the position 2 hydroxy group of 4-diphosphocytidyl-2C-methyl-D-erythritol. This chain is 4-diphosphocytidyl-2-C-methyl-D-erythritol kinase, found in Clostridium botulinum (strain Alaska E43 / Type E3).